Consider the following 292-residue polypeptide: Ribonuclease Z (292 aa).

The Zn(2+) site is built by His-60, His-62, Asp-64, His-65, His-132, Asp-200, and His-256. Asp-64 (proton acceptor) is an active-site residue.

Belongs to the RNase Z family. Homodimer. It depends on Zn(2+) as a cofactor.

The enzyme catalyses Endonucleolytic cleavage of RNA, removing extra 3' nucleotides from tRNA precursor, generating 3' termini of tRNAs. A 3'-hydroxy group is left at the tRNA terminus and a 5'-phosphoryl group is left at the trailer molecule.. Zinc phosphodiesterase, which displays some tRNA 3'-processing endonuclease activity. Probably involved in tRNA maturation, by removing a 3'-trailer from precursor tRNA. This chain is Ribonuclease Z, found in Sulfolobus acidocaldarius (strain ATCC 33909 / DSM 639 / JCM 8929 / NBRC 15157 / NCIMB 11770).